The primary structure comprises 929 residues: Isoleucine--tRNA ligase (929 aa).

The short motif at 58 to 68 (PYANGDIHIGH) is the 'HIGH' region element. L-isoleucyl-5'-AMP is bound at residue Glu-568. The 'KMSKS' region motif lies at 609–613 (KMSKS). Residue Lys-612 participates in ATP binding. Cys-892, Cys-895, Cys-912, and Cys-915 together coordinate Zn(2+).

Belongs to the class-I aminoacyl-tRNA synthetase family. IleS type 1 subfamily. As to quaternary structure, monomer. The cofactor is Zn(2+).

The protein resides in the cytoplasm. It carries out the reaction tRNA(Ile) + L-isoleucine + ATP = L-isoleucyl-tRNA(Ile) + AMP + diphosphate. Its function is as follows. Catalyzes the attachment of isoleucine to tRNA(Ile). As IleRS can inadvertently accommodate and process structurally similar amino acids such as valine, to avoid such errors it has two additional distinct tRNA(Ile)-dependent editing activities. One activity is designated as 'pretransfer' editing and involves the hydrolysis of activated Val-AMP. The other activity is designated 'posttransfer' editing and involves deacylation of mischarged Val-tRNA(Ile). In Thiobacillus denitrificans (strain ATCC 25259 / T1), this protein is Isoleucine--tRNA ligase.